The chain runs to 156 residues: Interleukin-36 receptor antagonist protein (156 aa).

The cysteines at positions 9 and 155 are disulfide-linked.

Belongs to the IL-1 family. As to quaternary structure, interacts with cargo receptor TMED10; the interaction mediates the translocation from the cytoplasm into the ERGIC (endoplasmic reticulum-Golgi intermediate compartment) and thereby secretion. Post-translationally, removal of N-terminal methionine is necessary for full antagonistic activity. As to expression, highly abundant in embryonic tissue and tissues containing epithelial cells.

It is found in the cytoplasm. The protein localises to the secreted. In terms of biological role, inhibits the activity of interleukin-36 (IL36A,IL36B and IL36G) by binding to receptor IL1RL2/IL-36R and preventing its association with the coreceptor IL1RAP for signaling. Part of the IL-36 signaling system that is thought to be present in epithelial barriers and to take part in local inflammatory response; similar to the IL-1 system with which it shares the coreceptor. Proposed to play a role in skin inflammation. May be involved in the innate immune response to fungal pathogens. May activate an anti-inflammatory signaling pathway by recruiting SIGIRR. In Mus musculus (Mouse), this protein is Interleukin-36 receptor antagonist protein.